We begin with the raw amino-acid sequence, 262 residues long: 5'-nucleotidase SurE (262 aa).

Positions 8, 9, 41, and 97 each coordinate a divalent metal cation.

Belongs to the SurE nucleotidase family. A divalent metal cation is required as a cofactor.

The protein localises to the cytoplasm. It catalyses the reaction a ribonucleoside 5'-phosphate + H2O = a ribonucleoside + phosphate. Functionally, nucleotidase that shows phosphatase activity on nucleoside 5'-monophosphates. The sequence is that of 5'-nucleotidase SurE from Methanococcus maripaludis (strain DSM 14266 / JCM 13030 / NBRC 101832 / S2 / LL).